The following is a 156-amino-acid chain: Small ribosomal subunit protein uS7 (156 aa).

Belongs to the universal ribosomal protein uS7 family. In terms of assembly, part of the 30S ribosomal subunit. Contacts proteins S9 and S11.

In terms of biological role, one of the primary rRNA binding proteins, it binds directly to 16S rRNA where it nucleates assembly of the head domain of the 30S subunit. Is located at the subunit interface close to the decoding center, probably blocks exit of the E-site tRNA. The protein is Small ribosomal subunit protein uS7 of Pectobacterium atrosepticum (strain SCRI 1043 / ATCC BAA-672) (Erwinia carotovora subsp. atroseptica).